We begin with the raw amino-acid sequence, 363 residues long: Galanin receptor 2a (363 aa).

Residues 1-23 lie on the Extracellular side of the membrane; that stretch reads MNASQQIHVFSSHWKVESVIISL. A helical membrane pass occupies residues 24-44; that stretch reads IFSMIFLVGTVGNCLVLAVLI. Residues 45–54 are Cytoplasmic-facing; it reads RNGQMNTKST. Residues 55-75 form a helical membrane-spanning segment; sequence NLFILNLGLADLCFIVFCVPL. The Extracellular segment spans residues 76 to 94; the sequence is QATIYTMDEWVFGAFVCKA. C92 and C169 are disulfide-bonded. Residues 95 to 115 traverse the membrane as a helical segment; sequence VHFIIYLTMYASIFTLAAVSL. The Cytoplasmic portion of the chain corresponds to 116 to 135; that stretch reads DRYLAIRYPLRSRETRTPRN. A helical transmembrane segment spans residues 136 to 156; sequence ALTSISLVWALSLFFSSPYLS. Residues 157 to 179 lie on the Extracellular side of the membrane; that stretch reads YYQQMDLDGTTVCIPAWSVHHRQ. Residues 180-200 form a helical membrane-spanning segment; sequence AMDICTFIFGYLIPVLILGIT. Over 201–230 the chain is Cytoplasmic; sequence YARTIRYLWTSVDPMQDMSESRKAKRKVTK. Residues 231–251 form a helical membrane-spanning segment; sequence MIIIVAVLFCLCWLPHHLVIL. The Extracellular portion of the chain corresponds to 252–268; it reads CMWFGHFPLNHTTYVLR. The chain crosses the membrane as a helical span at residues 269-289; the sequence is ILSHLVAYANSCLNPIVYALV. Over 290–363 the chain is Cytoplasmic; the sequence is SKHFRKGFKK…TSAFMTFNVT (74 aa).

Belongs to the G-protein coupled receptor 1 family. As to expression, expressed in neurons in the ventral area of the interpeduncular nucleus (IPN) where expression often overlaps with spx1.

It is found in the membrane. Its function is as follows. Receptor for the hormone galanin. Receptor for the hormones spexin-1 and spexin-2. This chain is Galanin receptor 2a, found in Danio rerio (Zebrafish).